A 228-amino-acid polypeptide reads, in one-letter code: Thermonuclease (228 aa).

The signal sequence occupies residues 1-23; sequence MTEYLLSAGICMAIVSILLIGMA. Positions 24 to 60 are excised as a propeptide; sequence ISNVSKEQYAKRFFFFATSCLVLTLVVASSLSSSANA. Asp100 is a binding site for Ca(2+). The active site involves Arg114. Ca(2+) contacts are provided by Asp119 and Thr120. Catalysis depends on residues Glu122 and Arg166.

The protein belongs to the thermonuclease family. Ca(2+) is required as a cofactor.

The protein localises to the secreted. It catalyses the reaction Endonucleolytic cleavage to nucleoside 3'-phosphates and 3'-phosphooligonucleotide end-products.. Enzyme that catalyzes the hydrolysis of both DNA and RNA at the 5' position of the phosphodiester bond. This Staphylococcus aureus (strain MRSA252) protein is Thermonuclease (nuc).